Reading from the N-terminus, the 647-residue chain is Protein cueball (647 aa).

Positions 1 to 22 (MLWCPSVLVPLIAVAACLPVLA) are cleaved as a signal peptide. Residues 23–534 (IGTPLEWEFA…CMTPSPWTSN (512 aa)) lie on the Extracellular side of the membrane. Residues N80 and N106 are each glycosylated (N-linked (GlcNAc...) asparagine). LDL-receptor class B repeat units lie at residues 119–166 (RNLF…DVCR), 167–211 (RKLY…DQLS), and 212–257 (DRIF…TNDA). An N-linked (GlcNAc...) asparagine glycan is attached at N175. The N-linked (GlcNAc...) asparagine glycan is linked to N316. 2 consecutive EGF-like domains span residues 365–401 (DEKTAQLERDHCLNGGTYIADRVLCICPTGFKGSRCE) and 436–473 (EISKCSGLCLNGGHCKLEDISEKPSCECPHNFAGERCE). 5 disulfide bridges follow: C376–C389, C391–C400, C440–C450, C444–C461, and C463–C472. N475 is a glycosylation site (N-linked (GlcNAc...) asparagine). A helical transmembrane segment spans residues 535–555 (VIIVLVLGIVSCFFLVAVIVH). The Cytoplasmic segment spans residues 556 to 647 (GFRRLYKPKR…LIHNMDDDLY (92 aa)).

The protein belongs to the cueball family.

It is found in the cell membrane. In terms of biological role, has a role in spermatogenesis and oogenesis. In Drosophila pseudoobscura pseudoobscura (Fruit fly), this protein is Protein cueball.